Here is a 309-residue protein sequence, read N- to C-terminus: Porphobilinogen deaminase (309 aa).

An S-(dipyrrolylmethanemethyl)cysteine modification is found at Cys-244.

The protein belongs to the HMBS family. As to quaternary structure, monomer. It depends on dipyrromethane as a cofactor.

It carries out the reaction 4 porphobilinogen + H2O = hydroxymethylbilane + 4 NH4(+). It functions in the pathway porphyrin-containing compound metabolism; protoporphyrin-IX biosynthesis; coproporphyrinogen-III from 5-aminolevulinate: step 2/4. Functionally, tetrapolymerization of the monopyrrole PBG into the hydroxymethylbilane pre-uroporphyrinogen in several discrete steps. This chain is Porphobilinogen deaminase, found in Listeria monocytogenes serotype 4a (strain HCC23).